Consider the following 226-residue polypeptide: Urease accessory protein UreF (226 aa).

This sequence belongs to the UreF family. UreD, UreF and UreG form a complex that acts as a GTP-hydrolysis-dependent molecular chaperone, activating the urease apoprotein by helping to assemble the nickel containing metallocenter of UreC. The UreE protein probably delivers the nickel.

It localises to the cytoplasm. Its function is as follows. Required for maturation of urease via the functional incorporation of the urease nickel metallocenter. This Burkholderia cenocepacia (strain ATCC BAA-245 / DSM 16553 / LMG 16656 / NCTC 13227 / J2315 / CF5610) (Burkholderia cepacia (strain J2315)) protein is Urease accessory protein UreF.